The primary structure comprises 120 residues: Chaperonin GroEL (120 aa).

23–27 contributes to the ATP binding site; sequence DGTTT.

It belongs to the chaperonin (HSP60) family. In terms of assembly, forms a cylinder of 14 subunits composed of two heptameric rings stacked back-to-back. Interacts with the co-chaperonin GroES.

It is found in the cytoplasm. The enzyme catalyses ATP + H2O + a folded polypeptide = ADP + phosphate + an unfolded polypeptide.. Together with its co-chaperonin GroES, plays an essential role in assisting protein folding. The GroEL-GroES system forms a nano-cage that allows encapsulation of the non-native substrate proteins and provides a physical environment optimized to promote and accelerate protein folding. The chain is Chaperonin GroEL from Mycolicibacterium pulveris (Mycobacterium pulveris).